The following is a 344-amino-acid chain: Methionine import ATP-binding protein MetN (344 aa).

The ABC transporter domain occupies 2–241; that stretch reads IEIRNLSQRF…PHHEVTRALI (240 aa). 38-45 serves as a coordination point for ATP; it reads GRSGAGKS.

Belongs to the ABC transporter superfamily. Methionine importer (TC 3.A.1.24) family. In terms of assembly, the complex is composed of two ATP-binding proteins (MetN), two transmembrane proteins (MetI) and a solute-binding protein (MetQ).

The protein resides in the cell inner membrane. It catalyses the reaction L-methionine(out) + ATP + H2O = L-methionine(in) + ADP + phosphate + H(+). The catalysed reaction is D-methionine(out) + ATP + H2O = D-methionine(in) + ADP + phosphate + H(+). Part of the ABC transporter complex MetNIQ involved in methionine import. Responsible for energy coupling to the transport system. This Burkholderia thailandensis (strain ATCC 700388 / DSM 13276 / CCUG 48851 / CIP 106301 / E264) protein is Methionine import ATP-binding protein MetN.